A 250-amino-acid chain; its full sequence is DNA repair protein RecO (250 aa).

Belongs to the RecO family.

Functionally, involved in DNA repair and RecF pathway recombination. This Staphylococcus aureus (strain Mu3 / ATCC 700698) protein is DNA repair protein RecO.